The following is a 209-amino-acid chain: Redox-sensing transcriptional repressor Rex (209 aa).

The segment at residues 16–55 is a DNA-binding region (H-T-H motif); that stretch reads LYYRFIQNLSLSGKQRVSSAELSEAVKVDSATIRRDFSYF. Position 90 to 95 (90 to 95) interacts with NAD(+); sequence GVGNLG.

Belongs to the transcriptional regulatory Rex family. In terms of assembly, homodimer.

Its subcellular location is the cytoplasm. Modulates transcription in response to changes in cellular NADH/NAD(+) redox state. The protein is Redox-sensing transcriptional repressor Rex of Bacillus mycoides (strain KBAB4) (Bacillus weihenstephanensis).